The primary structure comprises 368 residues: Phospho-N-acetylmuramoyl-pentapeptide-transferase (368 aa).

The next 9 helical transmembrane spans lie at 30-50 (AAAI…IAYL), 72-92 (LPTM…FLWA), 99-119 (VWLV…DDYL), 135-155 (LIGQ…DPSM), 170-190 (LTIN…TAIS), 201-221 (GLAA…AYLA), 238-258 (GGEV…FLWF), 265-286 (IIMG…ALLI), and 345-365 (KIVI…LMTL).

Belongs to the glycosyltransferase 4 family. MraY subfamily. Requires Mg(2+) as cofactor.

The protein resides in the cell inner membrane. The enzyme catalyses UDP-N-acetyl-alpha-D-muramoyl-L-alanyl-gamma-D-glutamyl-meso-2,6-diaminopimeloyl-D-alanyl-D-alanine + di-trans,octa-cis-undecaprenyl phosphate = di-trans,octa-cis-undecaprenyl diphospho-N-acetyl-alpha-D-muramoyl-L-alanyl-D-glutamyl-meso-2,6-diaminopimeloyl-D-alanyl-D-alanine + UMP. The protein operates within cell wall biogenesis; peptidoglycan biosynthesis. Catalyzes the initial step of the lipid cycle reactions in the biosynthesis of the cell wall peptidoglycan: transfers peptidoglycan precursor phospho-MurNAc-pentapeptide from UDP-MurNAc-pentapeptide onto the lipid carrier undecaprenyl phosphate, yielding undecaprenyl-pyrophosphoryl-MurNAc-pentapeptide, known as lipid I. This is Phospho-N-acetylmuramoyl-pentapeptide-transferase from Chlorobium chlorochromatii (strain CaD3).